The primary structure comprises 172 residues: uncharacterized protein (172 aa).

Topologically, residues 1–101 are lumenal; it reads MEHVSKRSIG…RYDINTRPLV (101 aa). The chain crosses the membrane as a helical span at residues 102–122; sequence VVLAISIVFFGCLLVLKDIII. The Cytoplasmic portion of the chain corresponds to 123-145; that stretch reads QSSENILSVSKWKIIGASFMGTP. The helical transmembrane segment at 146 to 164 threads the bilayer; sequence YTGLLTGLVGPLLSPFSAV. The Lumenal segment spans residues 165-172; sequence SSWLSFIF.

It is found in the endoplasmic reticulum membrane. This is an uncharacterized protein from Saccharomyces cerevisiae (strain ATCC 204508 / S288c) (Baker's yeast).